Reading from the N-terminus, the 217-residue chain is MDIVSVALQRYSTKAFDPSKKLTAEEADKIKTLLQYSPSSTNSQPWHFIVASTEEGKARVAKSAAGNYTFNERKMLDASHVVVFCAKTAMDDAWLERVVDQEDADGRFATPEAKAANDKGRRFFADMHRVSLKDDHQWMAKQVYLNVGNFLLGVAAMGLDAVPIEGFDAEVLDAEFGLKEKGYTSLVVVPVGHHSVEDFNAGLPKSRLPLETTLTEV.

10 to 14 (RYSTK) is a binding site for FMN. Residues lysine 14, threonine 41, asparagine 71, lysine 74, and arginine 107 each contribute to the NAD(+) site. Asparagine 71 serves as a coordination point for FMN. FMN-binding positions include 165 to 166 (EG) and 205 to 207 (KSR).

The protein belongs to the nitroreductase family. In terms of assembly, homodimer. FMN serves as cofactor.

In terms of biological role, reduction of a variety of nitroaromatic compounds using NADH (and to lesser extent NADPH) as source of reducing equivalents; two electrons are transferred. Capable of reducing nitrofurazone. In Salmonella typhimurium (strain LT2 / SGSC1412 / ATCC 700720), this protein is Oxygen-insensitive NAD(P)H nitroreductase.